Reading from the N-terminus, the 59-residue chain is MEMTDPLRREEKKESSPDPKEESGPSRPDVSRPGRDSLLKRMKKVDPKQSEKYKQRTGQ.

The segment at 1-59 (MEMTDPLRREEKKESSPDPKEESGPSRPDVSRPGRDSLLKRMKKVDPKQSEKYKQRTGQ) is disordered. Position 59 is a deamidated glutamine (glutamine 59). Glutamine 59 is covalently cross-linked (Isoglutamyl lysine isopeptide (Gln-Lys) (interchain with K-? in acceptor proteins)).

The protein belongs to the ubiquitin-like protein UBact family. May be modified by deamidation of its C-terminal glutamine to glutamate by the adjacently encoded deamidase. This could be a prerequisite to the subsequent conjugation, as shown in the other prokaryotic ubiquitin-like protein Pup.

Functionally, may function as a protein modifier covalently attached to lysine residues of substrate proteins. This may serve to target the modified proteins for degradation by proteasomes. The sequence is that of Prokaryotic ubiquitin-like protein UBact from Nitrospina gracilis (strain 3/211).